The following is a 160-amino-acid chain: Transcription elongation factor GreA (160 aa).

The stretch at 49 to 77 (SEYQSAKDEQAFVEGRIQTLKNMIDNAEI) forms a coiled coil.

Belongs to the GreA/GreB family.

Its function is as follows. Necessary for efficient RNA polymerase transcription elongation past template-encoded arresting sites. The arresting sites in DNA have the property of trapping a certain fraction of elongating RNA polymerases that pass through, resulting in locked ternary complexes. Cleavage of the nascent transcript by cleavage factors such as GreA or GreB allows the resumption of elongation from the new 3'terminus. GreA releases sequences of 2 to 3 nucleotides. The polypeptide is Transcription elongation factor GreA (Leuconostoc mesenteroides subsp. mesenteroides (strain ATCC 8293 / DSM 20343 / BCRC 11652 / CCM 1803 / JCM 6124 / NCDO 523 / NBRC 100496 / NCIMB 8023 / NCTC 12954 / NRRL B-1118 / 37Y)).